Here is a 380-residue protein sequence, read N- to C-terminus: Cytochrome b (380 aa).

4 consecutive transmembrane segments (helical) span residues 34–54 (FGSL…LLAA), 78–99 (WLIR…YMHV), 114–134 (WNTG…GYVL), and 179–199 (FFTL…IHLT). Histidine 84 and histidine 98 together coordinate heme b. Heme b-binding residues include histidine 183 and histidine 197. Histidine 202 contacts a ubiquinone. The next 4 membrane-spanning stretches (helical) occupy residues 227–247 (LKDI…ALFS), 289–309 (LGGV…PLLH), 321–341 (LSQL…WVGS), and 348–368 (FMII…ILFP).

Belongs to the cytochrome b family. As to quaternary structure, the cytochrome bc1 complex contains 11 subunits: 3 respiratory subunits (MT-CYB, CYC1 and UQCRFS1), 2 core proteins (UQCRC1 and UQCRC2) and 6 low-molecular weight proteins (UQCRH/QCR6, UQCRB/QCR7, UQCRQ/QCR8, UQCR10/QCR9, UQCR11/QCR10 and a cleavage product of UQCRFS1). This cytochrome bc1 complex then forms a dimer. The cofactor is heme b.

The protein resides in the mitochondrion inner membrane. In terms of biological role, component of the ubiquinol-cytochrome c reductase complex (complex III or cytochrome b-c1 complex) that is part of the mitochondrial respiratory chain. The b-c1 complex mediates electron transfer from ubiquinol to cytochrome c. Contributes to the generation of a proton gradient across the mitochondrial membrane that is then used for ATP synthesis. This chain is Cytochrome b (MT-CYB), found in Balearica pavonina (Black crowned-crane).